The primary structure comprises 195 residues: Imidazoleglycerol-phosphate dehydratase (195 aa).

This sequence belongs to the imidazoleglycerol-phosphate dehydratase family.

Its subcellular location is the cytoplasm. It carries out the reaction D-erythro-1-(imidazol-4-yl)glycerol 3-phosphate = 3-(imidazol-4-yl)-2-oxopropyl phosphate + H2O. The protein operates within amino-acid biosynthesis; L-histidine biosynthesis; L-histidine from 5-phospho-alpha-D-ribose 1-diphosphate: step 6/9. This Aminomonas aminovorus protein is Imidazoleglycerol-phosphate dehydratase.